The following is a 217-amino-acid chain: MALKLDVKAPGGKVEGSIELPAELFDAPANIALMHQVVTAQRAAARQGTHSTKTRGDVSGGGRKPYRQKGTGRARQGSTRAPQFTGGGVVHGPKPRDYSQRTPKKMIAAALRGALSDRARNGRIHAITELVSGQTPSTKSAKAFLGALTERKQVLVVIGRSDEAGAKSVRNLPGVHILAPDQLNTYDVLRADDVVFSVEALRAYIAANTGTPEEVSA.

The interval 42–100 is disordered; it reads RAAARQGTHSTKTRGDVSGGGRKPYRQKGTGRARQGSTRAPQFTGGGVVHGPKPRDYSQ.

This sequence belongs to the universal ribosomal protein uL4 family. As to quaternary structure, part of the 50S ribosomal subunit.

One of the primary rRNA binding proteins, this protein initially binds near the 5'-end of the 23S rRNA. It is important during the early stages of 50S assembly. It makes multiple contacts with different domains of the 23S rRNA in the assembled 50S subunit and ribosome. In terms of biological role, forms part of the polypeptide exit tunnel. The protein is Large ribosomal subunit protein uL4 of Mycolicibacterium paratuberculosis (strain ATCC BAA-968 / K-10) (Mycobacterium paratuberculosis).